We begin with the raw amino-acid sequence, 141 residues long: 3-hydroxyacyl-[acyl-carrier-protein] dehydratase FabZ (141 aa).

Histidine 49 is an active-site residue.

The protein belongs to the thioester dehydratase family. FabZ subfamily.

It is found in the cytoplasm. The enzyme catalyses a (3R)-hydroxyacyl-[ACP] = a (2E)-enoyl-[ACP] + H2O. Involved in unsaturated fatty acids biosynthesis. Catalyzes the dehydration of short chain beta-hydroxyacyl-ACPs and long chain saturated and unsaturated beta-hydroxyacyl-ACPs. The protein is 3-hydroxyacyl-[acyl-carrier-protein] dehydratase FabZ (fabZ2) of Enterococcus faecalis (strain ATCC 700802 / V583).